The chain runs to 597 residues: CTP synthase (597 aa).

The tract at residues 1–272 (MARPKNVKYV…DMRVLKKLGL (272 aa)) is amidoligase domain. S18 is a binding site for CTP. A UTP-binding site is contributed by S18. ATP is bound at residue 19–24 (SLGKGI). L-glutamine is bound at residue Y59. Residue D76 participates in ATP binding. Mg(2+) is bound by residues D76 and E146. CTP-binding positions include 153–155 (DIE), 193–198 (KTKPTQ), and K229. UTP contacts are provided by residues 193–198 (KTKPTQ) and K229. One can recognise a Glutamine amidotransferase type-1 domain in the interval 299–543 (NVAICGKYTE…VGAAKAYADG (245 aa)). An L-glutamine-binding site is contributed by G363. C390 acts as the Nucleophile; for glutamine hydrolysis in catalysis. Residues 391 to 394 (LGMQ), E414, and R471 each bind L-glutamine. Active-site residues include H516 and E518.

It belongs to the CTP synthase family. As to quaternary structure, homotetramer.

It catalyses the reaction UTP + L-glutamine + ATP + H2O = CTP + L-glutamate + ADP + phosphate + 2 H(+). The enzyme catalyses L-glutamine + H2O = L-glutamate + NH4(+). It carries out the reaction UTP + NH4(+) + ATP = CTP + ADP + phosphate + 2 H(+). It participates in pyrimidine metabolism; CTP biosynthesis via de novo pathway; CTP from UDP: step 2/2. Allosterically activated by GTP, when glutamine is the substrate; GTP has no effect on the reaction when ammonia is the substrate. The allosteric effector GTP functions by stabilizing the protein conformation that binds the tetrahedral intermediate(s) formed during glutamine hydrolysis. Inhibited by the product CTP, via allosteric rather than competitive inhibition. Its function is as follows. Catalyzes the ATP-dependent amination of UTP to CTP with either L-glutamine or ammonia as the source of nitrogen. Regulates intracellular CTP levels through interactions with the four ribonucleotide triphosphates. The chain is CTP synthase from Chlorobium luteolum (strain DSM 273 / BCRC 81028 / 2530) (Pelodictyon luteolum).